A 400-amino-acid polypeptide reads, in one-letter code: MQELEKAVPSSVRVTRQSENLVILEKDLATEQMVLAMGPQHPSTHGVLKLECLTDGEVVTEAEPVLGYLHRCFEKTAENVDYPAVVPFTDRLDYLAAMNSEFAYALTVEKLLDIEIPRRVEFIRILVAELNRIASHLVAIGTYGIDLGAFTPFLFCFRDREIILGLLEWASGARMLYNYVWVGGLAYDVPADFLKRIREFCAYFRPKAKELADLLTSNEIFVKRTHGIGIMPADVAINYGWSGPMLRGSGVEWDLRRNDPYSLYSELDFNVCVPDGKHSVIGDCLSRHLVRAYEMEESLNIIEQCIDKMPSSDGFNSRAAIPKKIRPKAGEVYGRAENPRGELGFYIQSDGKSTKPLRCKARSSCFVNLSAMKDLSKGQLIPDLVAIIGSIDIVLGEVDR.

This sequence belongs to the complex I 49 kDa subunit family. As to quaternary structure, NDH-1 is composed of 14 different subunits. Subunits NuoB, C, D, E, F, and G constitute the peripheral sector of the complex.

The protein resides in the cell inner membrane. It carries out the reaction a quinone + NADH + 5 H(+)(in) = a quinol + NAD(+) + 4 H(+)(out). In terms of biological role, NDH-1 shuttles electrons from NADH, via FMN and iron-sulfur (Fe-S) centers, to quinones in the respiratory chain. The immediate electron acceptor for the enzyme in this species is believed to be a menaquinone. Couples the redox reaction to proton translocation (for every two electrons transferred, four hydrogen ions are translocated across the cytoplasmic membrane), and thus conserves the redox energy in a proton gradient. This Chlorobium chlorochromatii (strain CaD3) protein is NADH-quinone oxidoreductase subunit D.